Here is a 347-residue protein sequence, read N- to C-terminus: Chlorophyll a/b light-harvesting protein PcbB (347 aa).

A run of 6 helical transmembrane segments spans residues 25-45, 64-84, 91-111, 206-226, 247-267, and 308-328; these read GLWL…AGAI, LILI…GVVV, AIGA…IFHV, LASG…WHIT, LSSA…FSAV, and LCNV…WHAI.

It belongs to the PsbB/PsbC family. IsiA/Pcb subfamily. The antenna complex consists of chlorophylls (a and b) and chlorophyll a/b binding proteins. Chlorophyll a serves as cofactor. Chlorophyll b is required as a cofactor.

The protein localises to the cellular thylakoid membrane. In terms of biological role, the antenna complex functions as a light receptor, it captures and delivers excitation energy to photosystems II and I. The Prochlorales pcb genes are not related to higher plant LHCs. The chain is Chlorophyll a/b light-harvesting protein PcbB (pcbB) from Prochlorothrix hollandica.